We begin with the raw amino-acid sequence, 121 residues long: Large ribosomal subunit protein uL3 (121 aa).

N5-methylglutamine is present on glutamine 62.

The protein belongs to the universal ribosomal protein uL3 family. In terms of assembly, part of the 50S ribosomal subunit. Forms a cluster with proteins L14 and L19. Methylated by PrmB.

One of the primary rRNA binding proteins, it binds directly near the 3'-end of the 23S rRNA, where it nucleates assembly of the 50S subunit. This is Large ribosomal subunit protein uL3 (rplC) from Aggregatibacter actinomycetemcomitans (Actinobacillus actinomycetemcomitans).